Reading from the N-terminus, the 288-residue chain is Bifunctional protein FolD (288 aa).

Residues 165-167 (GRS), S190, and I231 contribute to the NADP(+) site.

This sequence belongs to the tetrahydrofolate dehydrogenase/cyclohydrolase family. As to quaternary structure, homodimer.

The catalysed reaction is (6R)-5,10-methylene-5,6,7,8-tetrahydrofolate + NADP(+) = (6R)-5,10-methenyltetrahydrofolate + NADPH. It carries out the reaction (6R)-5,10-methenyltetrahydrofolate + H2O = (6R)-10-formyltetrahydrofolate + H(+). It functions in the pathway one-carbon metabolism; tetrahydrofolate interconversion. Functionally, catalyzes the oxidation of 5,10-methylenetetrahydrofolate to 5,10-methenyltetrahydrofolate and then the hydrolysis of 5,10-methenyltetrahydrofolate to 10-formyltetrahydrofolate. The sequence is that of Bifunctional protein FolD from Nitrosospira multiformis (strain ATCC 25196 / NCIMB 11849 / C 71).